Reading from the N-terminus, the 551-residue chain is Protein ROOT HAIR SPECIFIC 17 (551 aa).

The helical; Signal-anchor for type II membrane protein transmembrane segment at 39-59 threads the bilayer; sequence LFPLVSAVSGCLLLILFSFST. N-linked (GlcNAc...) asparagine glycosylation is found at Asn109 and Asn153. A substrate-binding site is contributed by 293–295; that stretch reads HLR. 2 N-linked (GlcNAc...) asparagine glycosylation sites follow: Asn405 and Asn465. Residues 515 to 539 are disordered; that stretch reads KAKHVNEDDSSEYSEIGNVPISSRS.

Belongs to the glycosyltransferase GT106 family. As to expression, specifically expressed in the root hair.

It localises to the membrane. It functions in the pathway glycan metabolism. In Arabidopsis thaliana (Mouse-ear cress), this protein is Protein ROOT HAIR SPECIFIC 17.